The primary structure comprises 465 residues: ATP synthase subunit beta (465 aa).

153–160 (GGAGVGKT) provides a ligand contact to ATP.

This sequence belongs to the ATPase alpha/beta chains family. In terms of assembly, F-type ATPases have 2 components, CF(1) - the catalytic core - and CF(0) - the membrane proton channel. CF(1) has five subunits: alpha(3), beta(3), gamma(1), delta(1), epsilon(1). CF(0) has three main subunits: a(1), b(2) and c(9-12). The alpha and beta chains form an alternating ring which encloses part of the gamma chain. CF(1) is attached to CF(0) by a central stalk formed by the gamma and epsilon chains, while a peripheral stalk is formed by the delta and b chains.

It localises to the cell membrane. The enzyme catalyses ATP + H2O + 4 H(+)(in) = ADP + phosphate + 5 H(+)(out). Functionally, produces ATP from ADP in the presence of a proton gradient across the membrane. The catalytic sites are hosted primarily by the beta subunits. The sequence is that of ATP synthase subunit beta from Clostridium perfringens (strain ATCC 13124 / DSM 756 / JCM 1290 / NCIMB 6125 / NCTC 8237 / Type A).